We begin with the raw amino-acid sequence, 529 residues long: Putative cysteine ligase BshC (529 aa).

The stretch at 450–485 (VKQTKGLENLEKRLLKAQKRNLSDQLQRVIDLQCEL) forms a coiled coil.

Belongs to the BshC family.

In Flavobacterium johnsoniae (strain ATCC 17061 / DSM 2064 / JCM 8514 / BCRC 14874 / CCUG 350202 / NBRC 14942 / NCIMB 11054 / UW101) (Cytophaga johnsonae), this protein is Putative cysteine ligase BshC.